Consider the following 724-residue polypeptide: Catalase-peroxidase (724 aa).

A cross-link (tryptophyl-tyrosyl-methioninium (Trp-Tyr) (with M-252)) is located at residues 98-226 (WHAAGTYRIA…LAAVMMGLIY (129 aa)). Catalysis depends on histidine 99, which acts as the Proton acceptor. A cross-link (tryptophyl-tyrosyl-methioninium (Tyr-Met) (with W-98)) is located at residues 226 to 252 (YVNPEGVDGNPDPLKTAHDIRVTFERM). Histidine 267 is a binding site for heme b.

This sequence belongs to the peroxidase family. Peroxidase/catalase subfamily. In terms of assembly, homodimer or homotetramer. Heme b serves as cofactor. In terms of processing, formation of the three residue Trp-Tyr-Met cross-link is important for the catalase, but not the peroxidase activity of the enzyme.

It carries out the reaction H2O2 + AH2 = A + 2 H2O. The enzyme catalyses 2 H2O2 = O2 + 2 H2O. Its function is as follows. Bifunctional enzyme with both catalase and broad-spectrum peroxidase activity. The sequence is that of Catalase-peroxidase from Psychromonas ingrahamii (strain DSM 17664 / CCUG 51855 / 37).